The following is a 192-amino-acid chain: MKQMILASASPRRRELLQGLGVPFEVMSSDIEEKINTELSAPEIAKELAYQKAKDVSNKLDGDYIVIGADTIVEYNRILGKPKDADEAYQMLKLLSGKIHRVITGFAVIDCRTKKEIVDFEVTNVYFNHLSDEEINRYIETKEPMDKAGAYGIQGKASLFVSKIEGDYFNVVGLPIFKLGVVLRNHFDINLL.

The Proton acceptor role is filled by Asp70.

The protein belongs to the Maf family. YhdE subfamily. A divalent metal cation is required as a cofactor.

The protein localises to the cytoplasm. It catalyses the reaction dTTP + H2O = dTMP + diphosphate + H(+). It carries out the reaction UTP + H2O = UMP + diphosphate + H(+). In terms of biological role, nucleoside triphosphate pyrophosphatase that hydrolyzes dTTP and UTP. May have a dual role in cell division arrest and in preventing the incorporation of modified nucleotides into cellular nucleic acids. This is dTTP/UTP pyrophosphatase from Alkaliphilus oremlandii (strain OhILAs) (Clostridium oremlandii (strain OhILAs)).